The primary structure comprises 203 residues: Recombination protein RecR (203 aa).

Residues 56-71 form a C4-type zinc finger; it reads CEVCGNVSDADRCRIC. The Toprim domain occupies 79–179; that stretch reads SLVCVVEEPK…TVTRIASGLP (101 aa).

Belongs to the RecR family.

May play a role in DNA repair. It seems to be involved in an RecBC-independent recombinational process of DNA repair. It may act with RecF and RecO. This chain is Recombination protein RecR, found in Mycobacterium sp. (strain JLS).